The chain runs to 463 residues: Cysteine--tRNA ligase (463 aa).

Cys-29 serves as a coordination point for Zn(2+). The 'HIGH' region motif lies at 31–41 (PTVYDFAHIGN). Residues Cys-227, His-252, and Glu-256 each contribute to the Zn(2+) site. The 'KMSKS' region signature appears at 285–289 (KMSKS). An ATP-binding site is contributed by Lys-288.

Belongs to the class-I aminoacyl-tRNA synthetase family. As to quaternary structure, monomer. Zn(2+) is required as a cofactor.

The protein localises to the cytoplasm. The enzyme catalyses tRNA(Cys) + L-cysteine + ATP = L-cysteinyl-tRNA(Cys) + AMP + diphosphate. The chain is Cysteine--tRNA ligase from Rhodopseudomonas palustris (strain ATCC BAA-98 / CGA009).